The primary structure comprises 376 residues: Salivary hyaluronidase (376 aa).

The signal sequence occupies residues 1–16 (MNWIFHLFCAVYGIFC). Cystine bridges form between cysteine 32/cysteine 328 and cysteine 203/cysteine 217. 4 N-linked (GlcNAc...) asparagine glycosylation sites follow: asparagine 36, asparagine 55, asparagine 77, and asparagine 88. Glutamate 118 acts as the Proton donor in catalysis. Residues asparagine 143, asparagine 153, asparagine 181, asparagine 214, asparagine 226, asparagine 248, asparagine 287, asparagine 321, asparagine 336, asparagine 356, and asparagine 371 are each glycosylated (N-linked (GlcNAc...) asparagine).

This sequence belongs to the glycosyl hydrolase 56 family. In terms of processing, glycosylated; glycosylation is critical for enzymatic activity. As to expression, female salivary gland (at protein level).

It localises to the secreted. The enzyme catalyses Random hydrolysis of (1-&gt;4)-linkages between N-acetyl-beta-D-glucosamine and D-glucuronate residues in hyaluronate.. Hydrolyzes high molecular weight hyaluronic acid to produce small oligosaccharides. Up-regulates expression of CSF2, CSF3, LIF, CXCL1, CXCL2 and CXCL8 in cultured human dermal microvascular endothelial cells. Promotes host neutrophil recruitment at the injection site. Functionally, (Microbial infection) Probably promotes Leishmania major infection in the host. In Lutzomyia longipalpis (Sand fly), this protein is Salivary hyaluronidase.